Reading from the N-terminus, the 327-residue chain is Glycerol-3-phosphate dehydrogenase [NAD(P)+] (327 aa).

NADPH contacts are provided by W11, R30, and K103. K103, G131, and S133 together coordinate sn-glycerol 3-phosphate. A135 provides a ligand contact to NADPH. 5 residues coordinate sn-glycerol 3-phosphate: K186, D243, S253, R254, and N255. The active-site Proton acceptor is the K186. R254 is an NADPH binding site. Positions 281 and 283 each coordinate NADPH.

Belongs to the NAD-dependent glycerol-3-phosphate dehydrogenase family.

It is found in the cytoplasm. The catalysed reaction is sn-glycerol 3-phosphate + NAD(+) = dihydroxyacetone phosphate + NADH + H(+). The enzyme catalyses sn-glycerol 3-phosphate + NADP(+) = dihydroxyacetone phosphate + NADPH + H(+). Its pathway is membrane lipid metabolism; glycerophospholipid metabolism. Its function is as follows. Catalyzes the reduction of the glycolytic intermediate dihydroxyacetone phosphate (DHAP) to sn-glycerol 3-phosphate (G3P), the key precursor for phospholipid synthesis. The polypeptide is Glycerol-3-phosphate dehydrogenase [NAD(P)+] (Wolbachia sp. subsp. Drosophila simulans (strain wRi)).